Here is a 478-residue protein sequence, read N- to C-terminus: Phosphoglycerate kinase 2, chloroplastic (478 aa).

A chloroplast-targeting transit peptide spans 1-74; sequence MASTAATAAL…GKGARGVITM (74 aa). A Phosphoserine modification is found at Ser-78. Positions 96, 97, 99, 113, 135, 136, 138, 139, 194, 226, and 227 each coordinate (2R)-3-phosphoglycerate. ADP is bound at residue Gly-272. Gly-272 lines the CDP pocket. Lys-274 and Lys-278 together coordinate AMP. ATP is bound at residue Lys-278. Gly-296 lines the ADP pocket. Gly-296 is a CDP binding site. Positions 297 and 369 each coordinate AMP. ATP contacts are provided by Gly-297 and Gly-369. CDP is bound by residues Gly-394 and Phe-399. Phe-399 is a binding site for ADP. Position 400 (Glu-400) interacts with AMP. ATP-binding residues include Glu-400, Asp-431, and Ser-432. Asp-431 is a Mg(2+) binding site.

It belongs to the phosphoglycerate kinase family. In terms of assembly, monomer. Mg(2+) is required as a cofactor.

It localises to the plastid. The protein resides in the chloroplast. The enzyme catalyses (2R)-3-phosphoglycerate + ATP = (2R)-3-phospho-glyceroyl phosphate + ADP. Its pathway is carbohydrate biosynthesis; Calvin cycle. This Arabidopsis thaliana (Mouse-ear cress) protein is Phosphoglycerate kinase 2, chloroplastic.